The primary structure comprises 66 residues: DNA-directed RNA polymerase subunit Rpo10 (66 aa).

The Zn(2+) site is built by C7, C10, C44, and C45.

It belongs to the archaeal Rpo10/eukaryotic RPB10 RNA polymerase subunit family. In terms of assembly, part of the RNA polymerase complex. The cofactor is Zn(2+).

It localises to the cytoplasm. The catalysed reaction is RNA(n) + a ribonucleoside 5'-triphosphate = RNA(n+1) + diphosphate. Its function is as follows. DNA-dependent RNA polymerase (RNAP) catalyzes the transcription of DNA into RNA using the four ribonucleoside triphosphates as substrates. The sequence is that of DNA-directed RNA polymerase subunit Rpo10 from Hyperthermus butylicus (strain DSM 5456 / JCM 9403 / PLM1-5).